The following is a 156-amino-acid chain: Probable inactive ribonuclease-like protein 13 (156 aa).

The signal sequence occupies residues 1 to 20 (MAPAVTRLLFLQLVLGPTLV). N-linked (GlcNAc...) asparagine glycosylation is present at Asn126.

Belongs to the pancreatic ribonuclease family.

It localises to the secreted. Does not exhibit any ribonuclease activity. This chain is Probable inactive ribonuclease-like protein 13 (RNASE13), found in Homo sapiens (Human).